Here is a 487-residue protein sequence, read N- to C-terminus: Cytochrome P450 720B2 (487 aa).

The helical transmembrane segment at 14–34 (WLVGLLCLVLGFLLLQLYKLV) threads the bilayer. Residue Cys-436 participates in heme binding.

The protein belongs to the cytochrome P450 family. Heme serves as cofactor.

Its subcellular location is the membrane. The sequence is that of Cytochrome P450 720B2 (CYP720B2) from Pinus taeda (Loblolly pine).